Here is a 545-residue protein sequence, read N- to C-terminus: uncharacterized protein (545 aa).

Residues 1 to 10 (MSRYRFRKAR) show a composition bias toward basic residues. Positions 1–25 (MSRYRFRKARSNWPMGQNDSRWEPP) are disordered. WD repeat units lie at residues 417-456 (ACNT…NPMM) and 460-501 (GHSN…MLCS).

This is an uncharacterized protein from Caenorhabditis elegans.